A 280-amino-acid polypeptide reads, in one-letter code: tRNA pseudouridine synthase A (280 aa).

The active-site Nucleophile is the Asp-55. Tyr-110 provides a ligand contact to substrate.

It belongs to the tRNA pseudouridine synthase TruA family.

The enzyme catalyses uridine(38/39/40) in tRNA = pseudouridine(38/39/40) in tRNA. Functionally, formation of pseudouridine at positions 38, 39 and 40 in the anticodon stem and loop of transfer RNAs. The sequence is that of tRNA pseudouridine synthase A from Methanosphaerula palustris (strain ATCC BAA-1556 / DSM 19958 / E1-9c).